Consider the following 264-residue polypeptide: Thymidylate synthase (264 aa).

Arg21 is a dUMP binding site. His51 is a binding site for (6R)-5,10-methylene-5,6,7,8-tetrahydrofolate. 126–127 (RR) is a dUMP binding site. Residue Cys146 is the Nucleophile of the active site. Residues 166 to 169 (RSAD), Asn177, and 207 to 209 (HLY) each bind dUMP. Asp169 provides a ligand contact to (6R)-5,10-methylene-5,6,7,8-tetrahydrofolate. Ala263 serves as a coordination point for (6R)-5,10-methylene-5,6,7,8-tetrahydrofolate.

The protein belongs to the thymidylate synthase family. Bacterial-type ThyA subfamily. Homodimer.

The protein resides in the cytoplasm. It carries out the reaction dUMP + (6R)-5,10-methylene-5,6,7,8-tetrahydrofolate = 7,8-dihydrofolate + dTMP. It participates in pyrimidine metabolism; dTTP biosynthesis. Its function is as follows. Catalyzes the reductive methylation of 2'-deoxyuridine-5'-monophosphate (dUMP) to 2'-deoxythymidine-5'-monophosphate (dTMP) while utilizing 5,10-methylenetetrahydrofolate (mTHF) as the methyl donor and reductant in the reaction, yielding dihydrofolate (DHF) as a by-product. This enzymatic reaction provides an intracellular de novo source of dTMP, an essential precursor for DNA biosynthesis. The sequence is that of Thymidylate synthase from Hahella chejuensis (strain KCTC 2396).